The chain runs to 426 residues: Proline--tRNA ligase (426 aa).

The protein belongs to the class-II aminoacyl-tRNA synthetase family. ProS type 2 subfamily. Homodimer.

It localises to the cytoplasm. It catalyses the reaction tRNA(Pro) + L-proline + ATP = L-prolyl-tRNA(Pro) + AMP + diphosphate. Catalyzes the attachment of proline to tRNA(Pro) in a two-step reaction: proline is first activated by ATP to form Pro-AMP and then transferred to the acceptor end of tRNA(Pro). This chain is Proline--tRNA ligase, found in Rickettsia rickettsii (strain Iowa).